The sequence spans 202 residues: Peptidyl-tRNA hydrolase (202 aa).

A tRNA-binding site is contributed by Tyr-14. His-19 acts as the Proton acceptor in catalysis. Positions 64, 66, and 112 each coordinate tRNA.

This sequence belongs to the PTH family. Monomer.

Its subcellular location is the cytoplasm. It carries out the reaction an N-acyl-L-alpha-aminoacyl-tRNA + H2O = an N-acyl-L-amino acid + a tRNA + H(+). Its function is as follows. Hydrolyzes ribosome-free peptidyl-tRNAs (with 1 or more amino acids incorporated), which drop off the ribosome during protein synthesis, or as a result of ribosome stalling. In terms of biological role, catalyzes the release of premature peptidyl moieties from peptidyl-tRNA molecules trapped in stalled 50S ribosomal subunits, and thus maintains levels of free tRNAs and 50S ribosomes. This is Peptidyl-tRNA hydrolase from Xanthobacter autotrophicus (strain ATCC BAA-1158 / Py2).